A 300-amino-acid chain; its full sequence is Protoheme IX farnesyltransferase (300 aa).

8 helical membrane-spanning segments follow: residues 24–44 (VTQL…PGMV), 46–66 (WHVL…AFAI), 94–114 (PQIL…LYTF), 118–138 (LTMW…TLLL), 146–166 (IVIG…AVTG), 172–192 (AWIL…VLAL), 224–244 (VILF…VVYL), and 278–298 (IVYL…RPLL).

The protein belongs to the UbiA prenyltransferase family. Protoheme IX farnesyltransferase subfamily.

It localises to the cell inner membrane. The catalysed reaction is heme b + (2E,6E)-farnesyl diphosphate + H2O = Fe(II)-heme o + diphosphate. Its pathway is porphyrin-containing compound metabolism; heme O biosynthesis; heme O from protoheme: step 1/1. Functionally, converts heme B (protoheme IX) to heme O by substitution of the vinyl group on carbon 2 of heme B porphyrin ring with a hydroxyethyl farnesyl side group. This is Protoheme IX farnesyltransferase from Burkholderia ambifaria (strain MC40-6).